The following is a 341-amino-acid chain: Heat-shock protein cognate (HSC) co-chaperone sgt12 (341 aa).

Residues 86-123 are disordered; that stretch reads PSKEPASAGAQAQSTEAQQPKAGAPTPESDKLKSEGNA. 3 TPR repeats span residues 114-147, 148-181, and 182-215; these read SDKLKSEGNAAMARKEYSKAIDLYTQALSIAPAN, PIYLSNRAAAYSASGQHEKAAEDAELATVVDPKY, and SKAWSRLGLARFDMADYKGAKEAYEKGIEAEGNG. Positions 232 to 280 are disordered; that stretch reads EEANRGAEPPADDVDDAAGASRGAGGMPDLSSLASMLGGRGGGGGGMPD. Positions 269 to 278 are enriched in gly residues; that stretch reads GGRGGGGGGM.

Belongs to the SGT family. Forms homodimers. Component of the get4/get5/sgt2 sorting complex. Dimers of sgt2 bind directly a single get5. Binds HSC family members ssa1, sse1, hsp104 and hsc82 via its TPR domain.

Its subcellular location is the cytoplasm. Functionally, heat-shock protein cognate (HSC) co-chaperone that preferentially binds endoplasmic reticulum-destined tail-anchored (TA) proteins and directs them to the GET (guided entry of TA proteins) pathway via get4 and get5. Get4 and get5 form an obligate complex that catalyzes the transfer of tail-anchored proteins destined to the endoplasmic reticulum from sgt2 to the cytosolic targeting factor which then targets the TA protein to the ER membrane via get1/get2. This Aspergillus fumigatus (strain ATCC MYA-4609 / CBS 101355 / FGSC A1100 / Af293) (Neosartorya fumigata) protein is Heat-shock protein cognate (HSC) co-chaperone sgt12.